The following is a 156-amino-acid chain: Small ribosomal subunit protein uS7 (156 aa).

This sequence belongs to the universal ribosomal protein uS7 family. In terms of assembly, part of the 30S ribosomal subunit. Contacts proteins S9 and S11.

In terms of biological role, one of the primary rRNA binding proteins, it binds directly to 16S rRNA where it nucleates assembly of the head domain of the 30S subunit. Is located at the subunit interface close to the decoding center, probably blocks exit of the E-site tRNA. In Buchnera aphidicola subsp. Baizongia pistaciae (strain Bp), this protein is Small ribosomal subunit protein uS7.